The following is a 552-amino-acid chain: Putative transport protein YPTS_4123 (552 aa).

Transmembrane regions (helical) follow at residues 1–21 (MSAI…GLWI), 26–46 (IYGV…VGHF), 65–85 (FGLI…FFSS), 96–116 (FAIL…KLFA), 119–139 (LPII…LGAA), and 158–178 (MGYA…MWLI). RCK C-terminal domains are found at residues 192–276 (AFDS…VVGE) and 279–361 (DVTL…IVGN). The next 6 membrane-spanning stretches (helical) occupy residues 371–391 (MLPV…PLFV), 393–413 (GFPA…ALIL), 439–459 (IVLF…NTLV), 464–484 (LAWI…VGIL), 493–513 (YLTL…LAFA), and 530–550 (VYPL…VLFW).

It belongs to the AAE transporter (TC 2.A.81) family. YidE subfamily.

The protein localises to the cell membrane. The chain is Putative transport protein YPTS_4123 from Yersinia pseudotuberculosis serotype IB (strain PB1/+).